The chain runs to 440 residues: Thymidine phosphorylase (440 aa).

The protein belongs to the thymidine/pyrimidine-nucleoside phosphorylase family. In terms of assembly, homodimer.

The enzyme catalyses thymidine + phosphate = 2-deoxy-alpha-D-ribose 1-phosphate + thymine. The protein operates within pyrimidine metabolism; dTMP biosynthesis via salvage pathway; dTMP from thymine: step 1/2. Its function is as follows. The enzymes which catalyze the reversible phosphorolysis of pyrimidine nucleosides are involved in the degradation of these compounds and in their utilization as carbon and energy sources, or in the rescue of pyrimidine bases for nucleotide synthesis. The protein is Thymidine phosphorylase of Salmonella arizonae (strain ATCC BAA-731 / CDC346-86 / RSK2980).